Here is a 972-residue protein sequence, read N- to C-terminus: Mast/stem cell growth factor receptor Kit (972 aa).

The first 25 residues, 1–25 (MRGARRAWDFLFVLQLLLRVQTGSS), serve as a signal peptide directing secretion. The Extracellular segment spans residues 26 to 520 (QPSVSPEELS…QIHAHTLFTP (495 aa)). Ig-like C2-type domains are found at residues 27–112 (PSVS…VFVR), 121–205 (DPPL…LKVR), 212–308 (PVVA…LEVV), 317–410 (PMMN…VYVN), and 413–507 (PEIL…FNFA). 4 cysteine pairs are disulfide-bonded: C58/C97, C136/C186, C151/C183, and C233/C290. N-linked (GlcNAc...) asparagine glycosylation is found at N94 and N145. N-linked (GlcNAc...) asparagine glycosylation is found at N283, N293, N300, N320, N352, N367, N400, N463, and N486. C428 and C491 form a disulfide bridge. Residues 521–541 (LLIGFVIAAGMMCIIVMILTY) traverse the membrane as a helical segment. Residues 542-972 (KYLQKPMYEV…TQPLLVHEDV (431 aa)) are Cytoplasmic-facing. Phosphotyrosine; by autocatalysis occurs at positions 543, 549, 564, and 566. A Mg(2+)-binding site is contributed by Y564. The segment at 564–566 (YVY) is important for interaction with phosphotyrosine-binding proteins. The Protein kinase domain occupies 585 to 933 (LSFGKTLGAG…ISESTNHIYS (349 aa)). ATP is bound by residues 592 to 599 (GAGAFGKV), K619, and 667 to 673 (EYCCYGD). A phosphotyrosine; by autocatalysis mark is found at Y699, Y717, and Y726. Residues S737 and S742 each carry the phosphoserine; by PKC/PRKCA modification. The active-site Proton acceptor is D788. R792 contributes to the ATP binding site. Mg(2+) contacts are provided by N793 and D806. At S817 the chain carries Phosphoserine. Y819 is subject to Phosphotyrosine; by autocatalysis. S887 is modified (phosphoserine). 2 positions are modified to phosphotyrosine; by autocatalysis: Y896 and Y932. Residue S955 is modified to Phosphoserine.

This sequence belongs to the protein kinase superfamily. Tyr protein kinase family. CSF-1/PDGF receptor subfamily. In terms of assembly, monomer in the absence of bound KITLG/SCF. Homodimer in the presence of bound KITLG/SCF, forming a heterotetramer with two KITLG/SCF molecules. Interacts (via phosphorylated tyrosine residues) with the adapter proteins GRB2 and GRB7 (via SH2 domain), and SH2B2/APS. Interacts (via C-terminus) with MPDZ (via the tenth PDZ domain). Interacts (via phosphorylated tyrosine residues) with PIK3R1 and PIK3 catalytic subunit. Interacts (via phosphorylated tyrosine) with CRK (isoform Crk-II), FYN, SHC1 and MATK/CHK (via SH2 domain). Interacts with LYN and FES/FPS. Interacts (via phosphorylated tyrosine residues) with the protein phosphatases PTPN6/SHP-1 (via SH2 domain), PTPN11/SHP-2 (via SH2 domain) and PTPRU. Interacts with PLCG1. Interacts with DOK1 and TEC. Interacts with IL1RAP (independent of stimulation with KITLG/SCF). A mast cell-specific KITLG/SCF-induced interleukin-33 signaling complex contains IL1RL1, IL1RAP, KIT and MYD88. In terms of processing, ubiquitinated by SOCS6. KIT is rapidly ubiquitinated after autophosphorylation induced by KITLG/SCF binding, leading to internalization and degradation. Post-translationally, autophosphorylated on tyrosine residues. KITLG/SCF binding promotes autophosphorylation. Phosphorylated tyrosine residues are important for interaction with specific binding partners.

It localises to the cell membrane. The enzyme catalyses L-tyrosyl-[protein] + ATP = O-phospho-L-tyrosyl-[protein] + ADP + H(+). Its activity is regulated as follows. Present in an inactive conformation in the absence of bound ligand. KITLG/SCF binding leads to dimerization and activation by autophosphorylation on tyrosine residues. Activity is down-regulated by PRKCA-mediated phosphorylation on serine residues. Functionally, tyrosine-protein kinase that acts as a cell-surface receptor for the cytokine KITLG/SCF and plays an essential role in the regulation of cell survival and proliferation, hematopoiesis, stem cell maintenance, gametogenesis, mast cell development, migration and function, and in melanogenesis. In response to KITLG/SCF binding, KIT can activate several signaling pathways. Phosphorylates PIK3R1, PLCG1, SH2B2/APS and CBL. Activates the AKT1 signaling pathway by phosphorylation of PIK3R1, the regulatory subunit of phosphatidylinositol 3-kinase. Activated KIT also transmits signals via GRB2 and activation of RAS, RAF1 and the MAP kinases MAPK1/ERK2 and/or MAPK3/ERK1. Promotes activation of STAT family members STAT1, STAT3, STAT5A and STAT5B. Activation of PLCG1 leads to the production of the cellular signaling molecules diacylglycerol and inositol 1,4,5-trisphosphate. KIT signaling is modulated by protein phosphatases, and by rapid internalization and degradation of the receptor. Activated KIT promotes phosphorylation of the protein phosphatases PTPN6/SHP-1 and PTPRU, and of the transcription factors STAT1, STAT3, STAT5A and STAT5B. Promotes phosphorylation of PIK3R1, CBL, CRK (isoform Crk-II), LYN, MAPK1/ERK2 and/or MAPK3/ERK1, PLCG1, SRC and SHC1. This chain is Mast/stem cell growth factor receptor Kit (KIT), found in Sus scrofa (Pig).